A 100-amino-acid polypeptide reads, in one-letter code: ESAT-6-like protein EsxB (100 aa).

The disordered stretch occupies residues 80–100 (GTQYTSTDEDQAGTLASSMNI).

It belongs to the WXG100 family. CFP-10 subfamily. Forms a tight 1:1 complex with EsxA. An artificial EsxA-EsxB heterodimer interacts with EspA.

The protein resides in the secreted. In terms of biological role, an exported protein. Plays a role in DNA conjugation, in at least a donor strain. The chain is ESAT-6-like protein EsxB from Mycolicibacterium smegmatis (strain ATCC 700084 / mc(2)155) (Mycobacterium smegmatis).